Consider the following 525-residue polypeptide: Probable malate:quinone oxidoreductase (525 aa).

Belongs to the MQO family. Requires FAD as cofactor.

It catalyses the reaction (S)-malate + a quinone = a quinol + oxaloacetate. It functions in the pathway carbohydrate metabolism; tricarboxylic acid cycle; oxaloacetate from (S)-malate (quinone route): step 1/1. The sequence is that of Probable malate:quinone oxidoreductase from Serratia proteamaculans (strain 568).